The sequence spans 393 residues: Beta-1,4-galactosyltransferase 3 (393 aa).

Residues 1 to 10 (MLRRLLERPC) are Cytoplasmic-facing. A helical; Signal-anchor for type II membrane protein membrane pass occupies residues 11–31 (TLALLVGSQLAVMMYLSLGGF). Residues 32-393 (RSLSALFGRD…ANHTALRGSH (362 aa)) lie on the Lumenal side of the membrane. Asparagine 57 carries N-linked (GlcNAc...) asparagine glycosylation. Cysteine 77 and cysteine 119 are disulfide-bonded. A UDP-alpha-D-galactose-binding site is contributed by 130 to 134 (PHRAR). The N-linked (GlcNAc...) asparagine glycan is linked to asparagine 166. UDP-alpha-D-galactose contacts are provided by residues 169-171 (FNR), 196-197 (VD), tyrosine 226, and tryptophan 258. An intrachain disulfide couples cysteine 190 to cysteine 209. Mn(2+) is bound at residue aspartate 197. 260–263 (GEDD) provides a ligand contact to N-acetyl-D-glucosamine. Position 291 (histidine 291) interacts with Mn(2+). 291–293 (HRG) lines the UDP-alpha-D-galactose pocket. Arginine 303 lines the N-acetyl-D-glucosamine pocket. 2 N-linked (GlcNAc...) asparagine glycosylation sites follow: asparagine 337 and asparagine 385. Residues 339-393 (TADIGTDPRGPRAPSGPRYPPGSSQAFRQEMLQRRPPARPGPPPTANHTALRGSH) are disordered.

This sequence belongs to the glycosyltransferase 7 family. It depends on Mn(2+) as a cofactor.

The protein resides in the golgi apparatus. The protein localises to the golgi stack membrane. The catalysed reaction is an N-acetyl-beta-D-glucosaminyl derivative + UDP-alpha-D-galactose = a beta-D-galactosyl-(1-&gt;4)-N-acetyl-beta-D-glucosaminyl derivative + UDP + H(+). It carries out the reaction N-acetyl-D-glucosamine + UDP-alpha-D-galactose = beta-D-galactosyl-(1-&gt;4)-N-acetyl-D-glucosamine + UDP + H(+). It catalyses the reaction a beta-D-GlcNAc-(1-&gt;3)-beta-D-Gal-(1-&gt;4)-beta-D-Glc-(1&lt;-&gt;1)-Cer(d18:1(4E)) + UDP-alpha-D-galactose = a neolactoside nLc4Cer(d18:1(4E)) + UDP + H(+). The enzyme catalyses a beta-D-glucosylceramide + UDP-alpha-D-galactose = a beta-D-galactosyl-(1-&gt;4)-beta-D-glucosyl-(1&lt;-&gt;1)-ceramide + UDP + H(+). The catalysed reaction is a neolactoside IV(3)-beta-GlcNAc-nLc4Cer + UDP-alpha-D-galactose = a neolactoside nLc6Cer + UDP + H(+). It participates in protein modification; protein glycosylation. Functionally, responsible for the synthesis of complex-type N-linked oligosaccharides in many glycoproteins as well as the carbohydrate moieties of glycolipids. This is Beta-1,4-galactosyltransferase 3 (B4GALT3) from Pongo abelii (Sumatran orangutan).